The chain runs to 222 residues: MFEYLPELMKGLHTSLTLTVASLIVALILALIFTIILTLKTPVLVWLVRGYITLFTGTPLLVQIFLIYYGPGQFPTLQEYPALWHLLSEPWLCALIALSLNSAAYTTQLFYGAIRAIPEGQWQSCSALGMSKKDTLAILLPYAFKRSLSSYSNEVVLVFKSTSLAYTITLMEVMGYSQLLYGRTYDVMVFGAAGIIYLVVNGLLTLMMRLIERKALAFERRN.

At 1–15 (MFEYLPELMKGLHTS) the chain is on the periplasmic side. The ABC transmembrane type-1 domain occupies 12 to 208 (LHTSLTLTVA…VVNGLLTLMM (197 aa)). A helical transmembrane segment spans residues 16 to 36 (LTLTVASLIVALILALIFTII). Topologically, residues 37-49 (LTLKTPVLVWLVR) are cytoplasmic. Residues 50 to 70 (GYITLFTGTPLLVQIFLIYYG) traverse the membrane as a helical segment. The Periplasmic segment spans residues 71 to 79 (PGQFPTLQE). A helical membrane pass occupies residues 80–100 (YPALWHLLSEPWLCALIALSL). At 101-154 (NSAAYTTQLFYGAIRAIPEGQWQSCSALGMSKKDTLAILLPYAFKRSLSSYSNE) the chain is on the cytoplasmic side. The helical transmembrane segment at 155–175 (VVLVFKSTSLAYTITLMEVMG) threads the bilayer. Over 176 to 186 (YSQLLYGRTYD) the chain is Periplasmic. The chain crosses the membrane as a helical span at residues 187–207 (VMVFGAAGIIYLVVNGLLTLM). Residues 208 to 222 (MRLIERKALAFERRN) are Cytoplasmic-facing.

This sequence belongs to the binding-protein-dependent transport system permease family. HisMQ subfamily. In terms of assembly, the complex is composed of two ATP-binding proteins (ArtP), two transmembrane proteins (ArtM and ArtQ) and two solute-binding proteins (ArtJ and ArtI).

The protein resides in the cell inner membrane. Functionally, part of the ABC transporter complex ArtPIQMJ involved in arginine transport. Probably responsible for the translocation of the substrate across the membrane. This Escherichia coli (strain K12) protein is Arginine ABC transporter permease protein ArtM (artM).